The chain runs to 131 residues: Large ribosomal subunit protein bL17 (131 aa).

This sequence belongs to the bacterial ribosomal protein bL17 family. As to quaternary structure, part of the 50S ribosomal subunit. Contacts protein L32.

This is Large ribosomal subunit protein bL17 from Thermotoga maritima (strain ATCC 43589 / DSM 3109 / JCM 10099 / NBRC 100826 / MSB8).